A 141-amino-acid chain; its full sequence is MLTAEDKKLIQQVWDKLQGCQEEVGAETLQRMFTTYPQTKTYFPHFDLSPGSDQIRGHGKKVVAALGTAVKSLDNLSQALSELSNLHAYNLRVDPVNFKLLAQCLQVVLATHMTKDYTPEIHAAFDKFLSAVAAVLAEKYR.

Positions 1 to 141 (MLTAEDKKLI…VAAVLAEKYR (141 aa)) constitute a Globin domain. Residues His-58 and His-87 each coordinate heme b.

The protein belongs to the globin family. Heterotetramer of two alpha-D chains and two beta chains. Red blood cells.

Involved in oxygen transport from the lung to the various peripheral tissues. This is Hemoglobin subunit alpha-D (HBAD) from Apus apus (Common swift).